The chain runs to 59 residues: uncharacterized protein (59 aa).

Positions M1–K59 are disordered. Basic and acidic residues-rich tracts occupy residues G24–R37 and L50–K59.

This is an uncharacterized protein from Salmonella phage P22 (Bacteriophage P22).